Consider the following 115-residue polypeptide: Dolichyl-diphosphooligosaccharide--protein glycosyltransferase subunit DAD1 (115 aa).

The Cytoplasmic segment spans residues 1–31 (MVKSTSKDAQDLFRSLRSAYSATPTNLKIID). Residues 32-52 (LYVVFAVFTALIQVVYMALVG) form a helical membrane-spanning segment. Over 53 to 55 (SFP) the chain is Lumenal. The helical transmembrane segment at 56–76 (FNSFLSGVLSCIGTAVLAVCL) threads the bilayer. The Cytoplasmic segment spans residues 77-94 (RIQVNKENKEFKDLAPER). A helical membrane pass occupies residues 95 to 115 (AFADFVLCNLVLHLVIINFLG).

The protein belongs to the DAD/OST2 family. In terms of assembly, component of the oligosaccharyltransferase (OST) complex. In terms of tissue distribution, ubiquitous.

Its subcellular location is the endoplasmic reticulum membrane. It functions in the pathway protein modification; protein glycosylation. Functionally, subunit of the oligosaccharyl transferase (OST) complex that catalyzes the initial transfer of a defined glycan (Glc(3)Man(9)GlcNAc(2) in eukaryotes) from the lipid carrier dolichol-pyrophosphate to an asparagine residue within an Asn-X-Ser/Thr consensus motif in nascent polypeptide chains, the first step in protein N-glycosylation. N-glycosylation occurs cotranslationally and the complex associates with the Sec61 complex at the channel-forming translocon complex that mediates protein translocation across the endoplasmic reticulum (ER). All subunits are required for a maximal enzyme activity. This chain is Dolichyl-diphosphooligosaccharide--protein glycosyltransferase subunit DAD1 (DAD1), found in Arabidopsis thaliana (Mouse-ear cress).